We begin with the raw amino-acid sequence, 1132 residues long: Ubiquitin carboxyl-terminal hydrolase 43 (1132 aa).

The tract at residues 1–103 is disordered; the sequence is MDPGVGNALG…GARPPGAQGL (103 aa). Positions 17 to 28 are enriched in basic residues; it reads RPRRRRSLRRLL. 2 stretches are compositionally biased toward low complexity: residues 29–44 and 63–78; these read NRFL…SGDS and FACA…GSPG. One can recognise a USP domain in the interval 101 to 710; sequence QGLKNHGNTC…GAYILFYQKR (610 aa). Cys110 functions as the Nucleophile in the catalytic mechanism. Residue His668 is the Proton acceptor of the active site. Residue Arg746 is modified to Asymmetric dimethylarginine. Disordered regions lie at residues 839 to 891, 935 to 1008, 1024 to 1044, and 1057 to 1106; these read RRRP…TGVP, TVMP…RGQG, RTVR…SDRL, and RESP…GEQI. The segment covering 941 to 950 has biased composition (basic and acidic residues); it reads GDEKPARPEG. Low complexity predominate over residues 958 to 967; sequence GSSQVGSQSS. A Phosphoserine modification is found at Ser970. Basic and acidic residues predominate over residues 994-1006; sequence AAMEERAPDKDRG.

Belongs to the peptidase C19 family.

It carries out the reaction Thiol-dependent hydrolysis of ester, thioester, amide, peptide and isopeptide bonds formed by the C-terminal Gly of ubiquitin (a 76-residue protein attached to proteins as an intracellular targeting signal).. Its function is as follows. May recognize and hydrolyze the peptide bond at the C-terminal Gly of ubiquitin. Involved in the processing of poly-ubiquitin precursors as well as that of ubiquitinated proteins. The sequence is that of Ubiquitin carboxyl-terminal hydrolase 43 (Usp43) from Mus musculus (Mouse).